The chain runs to 171 residues: Auxin-responsive protein IAA33 (171 aa).

2 stretches are compositionally biased toward polar residues: residues 1 to 11 (MNSFEPQSQDS) and 19 to 32 (DNST…TTTP). The disordered stretch occupies residues 1 to 51 (MNSFEPQSQDSLQRRFHQDNSTTQQPRDTTTPFIPKPASKNHNNSNSSSGA). Low complexity predominate over residues 40–49 (KNHNNSNSSS). In terms of domain architecture, PB1 spans 72 to 162 (VPPVTVVLEG…KRIRILPVKG (91 aa)).

The protein belongs to the Aux/IAA family. In terms of assembly, homodimers and heterodimers.

Its subcellular location is the nucleus. Aux/IAA proteins are short-lived transcriptional factors that function as repressors of early auxin response genes at low auxin concentrations. Repression is thought to result from the interaction with auxin response factors (ARFs), proteins that bind to the auxin-responsive promoter element (AuxRE). Formation of heterodimers with ARF proteins may alter their ability to modulate early auxin response genes expression. The sequence is that of Auxin-responsive protein IAA33 (IAA33) from Arabidopsis thaliana (Mouse-ear cress).